We begin with the raw amino-acid sequence, 46 residues long: Protein PsbN (46 aa).

The chain crosses the membrane as a helical span at residues 7 to 27; it reads ALSVALGVMAVVLGLTGFGVY.

Belongs to the PsbN family.

The protein localises to the cellular thylakoid membrane. Its function is as follows. May play a role in photosystem I and II biogenesis. The polypeptide is Protein PsbN (Synechococcus sp. (strain CC9902)).